A 259-amino-acid chain; its full sequence is Pycsar effector protein RsmPycTIR (259 aa).

1–120 (MVGGDEVIAN…RRVHEDFSGR (120 aa)) lines the a nucleoside 3',5'-cyclic phosphate pocket. The interval 126 to 229 (LATGISRRTS…AEFQYQISSS (104 aa)) is TIR-like. 3 helical membrane passes run 136–156 (GWNWTVISLTAGVLSAAAIWY), 169–189 (VLLPLVVGLTIFLLTLLADPV), and 234–254 (QATALLAPIVLGALAAYLFWI).

Its subcellular location is the cell inner membrane. The enzyme catalyses NAD(+) + H2O = ADP-D-ribose + nicotinamide + H(+). Its function is as follows. Pycsar (pyrimidine cyclase system for antiphage resistance) provides immunity against bacteriophage. The pyrimidine cyclase (PycC) synthesizes cyclic nucleotides in response to infection; these serve as specific second messenger signals. The signals activate the adjacent effector, leading to bacterial cell death and abortive phage infection. A clade B Pycsar system. The effector gene of a two-gene Pycsar system. Expression of this and adjacent uridylate cyclase RsmPycC (AC A0A1V0HUX5) probably confers resistance to bacteriophage. The genes are probably only expressed in response to bacteriophage infection. Probably only responds to cUMP (produced by its cognate NTP cyclase), it may act by degrading NAD(+) and/or by impairing membrane integrity. This Rhodovulum sp. (strain MB263) protein is Pycsar effector protein RsmPycTIR.